A 217-amino-acid polypeptide reads, in one-letter code: Probable GTP-binding protein EngB (217 aa).

An EngB-type G domain is found at 29-213; that stretch reads GPLEVAFAGR…RQAIAETVGI (185 aa). Residues 37 to 44, 64 to 68, 91 to 94, 158 to 161, and 192 to 194 each bind GTP; these read GRSNVGKS, GRTQE, DMPG, TKTD, and TSS. Mg(2+)-binding residues include Ser-44 and Thr-66.

The protein belongs to the TRAFAC class TrmE-Era-EngA-EngB-Septin-like GTPase superfamily. EngB GTPase family. Mg(2+) is required as a cofactor.

Functionally, necessary for normal cell division and for the maintenance of normal septation. The polypeptide is Probable GTP-binding protein EngB (Rhizobium johnstonii (strain DSM 114642 / LMG 32736 / 3841) (Rhizobium leguminosarum bv. viciae)).